Consider the following 439-residue polypeptide: MGCMCIAMAPRTLLLLIGCQLVFGFNEPLNIVSHLNDDWFLFGDSRSDCTYVENNGHPKLDWLDLDPKLCNSGRISAKSGNSLFRSFHFIDFYNYSGEGDQVIFYEGVNFSPSHGFKCLAYGDNKRWMGNKARFYARVYEKMAQYRSLSFVNVSYAYGGNAKPTSICKDKTLTLNNPTFISKESNYVDYYYESEANFTLQGCDEFIVPLCVFNGHSKGSSSDPANKYYTDSQSYYNMDTGVLYGFNSTLDVGNTVQNPGLDLTCRYLALTPGNYKAVSLEYLLSLPSKAICLRKPKSFMPVQVVDSRWNSTRQSDNMTAVACQLPYCFFRNTSADYSGGTHDVHHGDFHFRQLLSGLLYNVSCIAQQGAFVYNNVSSSWPAYGYGHCPTAANIGYMAPVCIYDPLPVILLGVLLGIAVLIIVFLMFYFMTDSGVRLHEA.

A signal peptide spans 1–22; it reads MGCMCIAMAPRTLLLLIGCQLV. The segment at 12-132 is esterase domain 1; the sequence is TLLLLIGCQL…DNKRWMGNKA (121 aa). The Virion surface portion of the chain corresponds to 23–407; the sequence is FGFNEPLNIV…PVCIYDPLPV (385 aa). Catalysis depends on S45, which acts as the Nucleophile. A disulfide bridge connects residues C49 and C70. N-linked (GlcNAc...) asparagine; by host glycans are attached at residues N94, N152, N196, N246, N309, and N316. The cysteines at positions 118 and 167 are disulfide-linked. The receptor binding stretch occupies residues 133 to 281; sequence RFYARVYEKM…GNYKAVSLEY (149 aa). 2 disulfide bridges follow: C202-C291 and C210-C264. The segment at 282–395 is esterase domain 2; the sequence is LLSLPSKAIC…HCPTAANIGY (114 aa). A disulfide bond links C322 and C327. N331 is a glycosylation site (N-linked (GlcNAc...) asparagine; by host). Catalysis depends on charge relay system residues D342 and H345. Residues N360 and N374 are each glycosylated (N-linked (GlcNAc...) asparagine; by host). A disulfide bond links C363 and C387. Residues 408–428 form a helical membrane-spanning segment; the sequence is ILLGVLLGIAVLIIVFLMFYF. Over 429–439 the chain is Intravirion; that stretch reads MTDSGVRLHEA.

Belongs to the influenza type C/coronaviruses hemagglutinin-esterase family. In terms of assembly, homodimer; disulfide-linked. Forms a complex with the M protein in the pre-Golgi. Associates then with S-M complex to form a ternary complex S-M-HE. Post-translationally, N-glycosylated in the host RER.

The protein localises to the virion membrane. It localises to the host cell membrane. The catalysed reaction is N-acetyl-9-O-acetylneuraminate + H2O = N-acetylneuraminate + acetate + H(+). The enzyme catalyses N-acetyl-4-O-acetylneuraminate + H2O = N-acetylneuraminate + acetate + H(+). Structural protein that makes short spikes at the surface of the virus. Contains receptor binding and receptor-destroying activities. Mediates de-O-acetylation of N-acetyl-4-O-acetylneuraminic acid, which is probably the receptor determinant recognized by the virus on the surface of erythrocytes and susceptible cells. This receptor-destroying activity is important for virus release as it probably helps preventing self-aggregation and ensures the efficient spread of the progeny virus from cell to cell. May serve as a secondary viral attachment protein for initiating infection, the spike protein being the major one. May become a target for both the humoral and the cellular branches of the immune system. This Murine coronavirus (strain S) (MHV-S) protein is Hemagglutinin-esterase.